Reading from the N-terminus, the 62-residue chain is Large ribosomal subunit protein bL33 (62 aa).

This sequence belongs to the bacterial ribosomal protein bL33 family.

This chain is Large ribosomal subunit protein bL33, found in Azobacteroides pseudotrichonymphae genomovar. CFP2.